We begin with the raw amino-acid sequence, 88 residues long: Small ribosomal subunit protein bS16c (88 aa).

The protein belongs to the bacterial ribosomal protein bS16 family.

It is found in the plastid. Its subcellular location is the chloroplast. The polypeptide is Small ribosomal subunit protein bS16c (Atropa belladonna (Belladonna)).